The chain runs to 288 residues: Bifunctional protein MdtA (288 aa).

NADP(+) is bound by residues 129–132 (TGPV), 152–156 (RKLDK), 195–198 (TAGA), and Lys-256.

In terms of assembly, homotrimer.

It is found in the cytoplasm. It catalyses the reaction 5,10-methylenetetrahydromethanopterin + NADP(+) = 5,10-methenyl-5,6,7,8-tetrahydromethanopterin + NADPH. It carries out the reaction (6R)-5,10-methylene-5,6,7,8-tetrahydrofolate + NADP(+) = (6R)-5,10-methenyltetrahydrofolate + NADPH. Its pathway is one-carbon metabolism; formaldehyde degradation; formate from formaldehyde (H(4)MPT route): step 2/5. In terms of biological role, catalyzes the dehydrogenation of methylene-H(4)MPT. Can also catalyze the reversible dehydrogenation of methylene-H(4)F with 20-fold lower catalytic efficiency. This is Bifunctional protein MdtA from Methylorubrum extorquens (strain ATCC 14718 / DSM 1338 / JCM 2805 / NCIMB 9133 / AM1) (Methylobacterium extorquens).